The chain runs to 203 residues: Inosine triphosphate pyrophosphatase (203 aa).

Residue 10–15 (TGNQNK) coordinates ITP. A Mg(2+)-binding site is contributed by glutamate 40. ITP-binding positions include lysine 52, 68 to 69 (DT), lysine 85, 145 to 148 (FGWD), lysine 168, and 173 to 174 (HR).

This sequence belongs to the HAM1 NTPase family. As to quaternary structure, homodimer. It depends on Mg(2+) as a cofactor. Mn(2+) serves as cofactor.

Its subcellular location is the cytoplasm. It carries out the reaction ITP + H2O = IMP + diphosphate + H(+). The enzyme catalyses dITP + H2O = dIMP + diphosphate + H(+). The catalysed reaction is XTP + H2O = XMP + diphosphate + H(+). Functionally, pyrophosphatase that hydrolyzes non-canonical purine nucleotides such as inosine triphosphate (ITP), deoxyinosine triphosphate (dITP) or xanthosine 5'-triphosphate (XTP) to their respective monophosphate derivatives. The enzyme does not distinguish between the deoxy- and ribose forms. Probably excludes non-canonical purines from RNA and DNA precursor pools, thus preventing their incorporation into RNA and DNA and avoiding chromosomal lesions. In Nematostella vectensis (Starlet sea anemone), this protein is Inosine triphosphate pyrophosphatase.